We begin with the raw amino-acid sequence, 312 residues long: Glyoxylate/hydroxypyruvate reductase A (312 aa).

Residue Arg227 is part of the active site. His275 serves as the catalytic Proton donor.

It belongs to the D-isomer specific 2-hydroxyacid dehydrogenase family. GhrA subfamily.

It is found in the cytoplasm. The enzyme catalyses glycolate + NADP(+) = glyoxylate + NADPH + H(+). The catalysed reaction is (R)-glycerate + NAD(+) = 3-hydroxypyruvate + NADH + H(+). It catalyses the reaction (R)-glycerate + NADP(+) = 3-hydroxypyruvate + NADPH + H(+). In terms of biological role, catalyzes the NADPH-dependent reduction of glyoxylate and hydroxypyruvate into glycolate and glycerate, respectively. This Escherichia coli (strain 55989 / EAEC) protein is Glyoxylate/hydroxypyruvate reductase A.